We begin with the raw amino-acid sequence, 412 residues long: Serine hydroxymethyltransferase 1 (412 aa).

(6S)-5,6,7,8-tetrahydrofolate contacts are provided by residues L116 and 120-122 (GHL). At K225 the chain carries N6-(pyridoxal phosphate)lysine.

Belongs to the SHMT family. As to quaternary structure, homodimer. Pyridoxal 5'-phosphate is required as a cofactor.

The protein resides in the cytoplasm. The enzyme catalyses (6R)-5,10-methylene-5,6,7,8-tetrahydrofolate + glycine + H2O = (6S)-5,6,7,8-tetrahydrofolate + L-serine. It participates in one-carbon metabolism; tetrahydrofolate interconversion. Its pathway is amino-acid biosynthesis; glycine biosynthesis; glycine from L-serine: step 1/1. In terms of biological role, catalyzes the reversible interconversion of serine and glycine with tetrahydrofolate (THF) serving as the one-carbon carrier. This reaction serves as the major source of one-carbon groups required for the biosynthesis of purines, thymidylate, methionine, and other important biomolecules. Also exhibits THF-independent aldolase activity toward beta-hydroxyamino acids, producing glycine and aldehydes, via a retro-aldol mechanism. This Pseudomonas fluorescens (strain Pf0-1) protein is Serine hydroxymethyltransferase 1.